A 198-amino-acid chain; its full sequence is Nucleoside triphosphate pyrophosphatase (198 aa).

The Proton acceptor role is filled by Asp-72.

Belongs to the Maf family. A divalent metal cation is required as a cofactor.

The protein resides in the cytoplasm. The enzyme catalyses a ribonucleoside 5'-triphosphate + H2O = a ribonucleoside 5'-phosphate + diphosphate + H(+). It carries out the reaction a 2'-deoxyribonucleoside 5'-triphosphate + H2O = a 2'-deoxyribonucleoside 5'-phosphate + diphosphate + H(+). Nucleoside triphosphate pyrophosphatase. May have a dual role in cell division arrest and in preventing the incorporation of modified nucleotides into cellular nucleic acids. This is Nucleoside triphosphate pyrophosphatase from Corynebacterium aurimucosum (strain ATCC 700975 / DSM 44827 / CIP 107346 / CN-1) (Corynebacterium nigricans).